A 286-amino-acid chain; its full sequence is ATP synthase gamma chain (286 aa).

Belongs to the ATPase gamma chain family. In terms of assembly, F-type ATPases have 2 components, CF(1) - the catalytic core - and CF(0) - the membrane proton channel. CF(1) has five subunits: alpha(3), beta(3), gamma(1), delta(1), epsilon(1). CF(0) has three main subunits: a, b and c.

It localises to the cell inner membrane. Its function is as follows. Produces ATP from ADP in the presence of a proton gradient across the membrane. The gamma chain is believed to be important in regulating ATPase activity and the flow of protons through the CF(0) complex. This chain is ATP synthase gamma chain, found in Shewanella putrefaciens (strain CN-32 / ATCC BAA-453).